We begin with the raw amino-acid sequence, 157 residues long: 6,7-dimethyl-8-ribityllumazine synthase 1 (157 aa).

Residues F22, 53 to 55 (ALE), and 82 to 84 (TVI) contribute to the 5-amino-6-(D-ribitylamino)uracil site. A (2S)-2-hydroxy-3-oxobutyl phosphate-binding site is contributed by 87–88 (ET). Catalysis depends on H90, which acts as the Proton donor. N115 provides a ligand contact to 5-amino-6-(D-ribitylamino)uracil. R129 contributes to the (2S)-2-hydroxy-3-oxobutyl phosphate binding site.

This sequence belongs to the DMRL synthase family.

The enzyme catalyses (2S)-2-hydroxy-3-oxobutyl phosphate + 5-amino-6-(D-ribitylamino)uracil = 6,7-dimethyl-8-(1-D-ribityl)lumazine + phosphate + 2 H2O + H(+). It participates in cofactor biosynthesis; riboflavin biosynthesis; riboflavin from 2-hydroxy-3-oxobutyl phosphate and 5-amino-6-(D-ribitylamino)uracil: step 1/2. Its function is as follows. Catalyzes the formation of 6,7-dimethyl-8-ribityllumazine by condensation of 5-amino-6-(D-ribitylamino)uracil with 3,4-dihydroxy-2-butanone 4-phosphate. This is the penultimate step in the biosynthesis of riboflavin. This chain is 6,7-dimethyl-8-ribityllumazine synthase 1, found in Brucella suis biovar 1 (strain 1330).